Here is a 44-residue protein sequence, read N- to C-terminus: Photosystem I reaction center subunit IX (44 aa).

The helical transmembrane segment at tyrosine 7–isoleucine 27 threads the bilayer.

This sequence belongs to the PsaJ family.

It is found in the plastid. The protein localises to the chloroplast thylakoid membrane. Functionally, may help in the organization of the PsaE and PsaF subunits. The protein is Photosystem I reaction center subunit IX of Solanum bulbocastanum (Wild potato).